A 94-amino-acid chain; its full sequence is UPF0358 protein Bcer98_2651 (94 aa).

This sequence belongs to the UPF0358 family.

In Bacillus cytotoxicus (strain DSM 22905 / CIP 110041 / 391-98 / NVH 391-98), this protein is UPF0358 protein Bcer98_2651.